An 81-amino-acid chain; its full sequence is ATP synthase subunit c (81 aa).

Helical transmembrane passes span 6–26 (ASAS…GPGI) and 57–77 (LAFM…LLFA).

The protein belongs to the ATPase C chain family. As to quaternary structure, F-type ATPases have 2 components, F(1) - the catalytic core - and F(0) - the membrane proton channel. F(1) has five subunits: alpha(3), beta(3), gamma(1), delta(1), epsilon(1). F(0) has four main subunits: a(1), b(1), b'(1) and c(10-14). The alpha and beta chains form an alternating ring which encloses part of the gamma chain. F(1) is attached to F(0) by a central stalk formed by the gamma and epsilon chains, while a peripheral stalk is formed by the delta, b and b' chains.

It localises to the cellular thylakoid membrane. In terms of biological role, f(1)F(0) ATP synthase produces ATP from ADP in the presence of a proton or sodium gradient. F-type ATPases consist of two structural domains, F(1) containing the extramembraneous catalytic core and F(0) containing the membrane proton channel, linked together by a central stalk and a peripheral stalk. During catalysis, ATP synthesis in the catalytic domain of F(1) is coupled via a rotary mechanism of the central stalk subunits to proton translocation. Functionally, key component of the F(0) channel; it plays a direct role in translocation across the membrane. A homomeric c-ring of between 10-14 subunits forms the central stalk rotor element with the F(1) delta and epsilon subunits. This chain is ATP synthase subunit c, found in Gloeothece citriformis (strain PCC 7424) (Cyanothece sp. (strain PCC 7424)).